A 255-amino-acid chain; its full sequence is Hemin import ATP-binding protein HmuV (255 aa).

An ABC transporter domain is found at 2-238 (LQVEGLYLCR…AALKAVYGID (237 aa)). ATP is bound at residue 34–41 (GPNGAGKS).

Belongs to the ABC transporter superfamily. Heme (hemin) importer (TC 3.A.1.14.5) family. In terms of assembly, the complex is composed of two ATP-binding proteins (HmuV), two transmembrane proteins (HmuU) and a solute-binding protein (HmuT).

The protein localises to the cell inner membrane. In terms of biological role, part of the ABC transporter complex HmuTUV involved in hemin import. Responsible for energy coupling to the transport system. This Pseudomonas putida (strain ATCC 47054 / DSM 6125 / CFBP 8728 / NCIMB 11950 / KT2440) protein is Hemin import ATP-binding protein HmuV.